The sequence spans 313 residues: BTB/POZ domain-containing adapter for CUL3-mediated RhoA degradation protein 3 (313 aa).

M1 carries the post-translational modification N-acetylmethionine. S23 carries the post-translational modification Phosphoserine. One can recognise a BTB domain in the interval 32–100; sequence KYVKLNVGGA…LRDGAVPLPE (69 aa). The PCNA-binding motif lies at 239-245; that stretch reads QTKVEFP.

The protein belongs to the BACURD family. In terms of assembly, homotetramer; forms a two-fold symmetric tetramer in solution. Interacts with CUL3; interaction is direct and forms a 5:5 heterodecamer. Component of the BCR(BACURD3) E3 ubiquitin ligase complex, at least composed of CUL3, KCTD10/BACURD3 and RBX1. Interacts with DNA polymerase delta subunit 2/POLD2. Interacts with PCNA.

Its subcellular location is the nucleus. It participates in protein modification; protein ubiquitination. Its function is as follows. Substrate-specific adapter of a BCR (BTB-CUL3-RBX1) E3 ubiquitin-protein ligase complex. The BCR(BACURD3) E3 ubiquitin ligase complex mediates the ubiquitination of target proteins, leading to their degradation by the proteasome. This is BTB/POZ domain-containing adapter for CUL3-mediated RhoA degradation protein 3 (KCTD10) from Homo sapiens (Human).